The sequence spans 348 residues: Anthranilate phosphoribosyltransferase (348 aa).

5-phospho-alpha-D-ribose 1-diphosphate-binding positions include Gly81, Gly84 to Asp85, Thr89, Asn91 to Thr94, Lys109 to Gly117, and Ser121. Residue Gly81 coordinates anthranilate. Ser93 contacts Mg(2+). Asn112 contributes to the anthranilate binding site. An anthranilate-binding site is contributed by Arg167. Positions 226 and 227 each coordinate Mg(2+).

It belongs to the anthranilate phosphoribosyltransferase family. As to quaternary structure, homodimer. Mg(2+) serves as cofactor.

It catalyses the reaction N-(5-phospho-beta-D-ribosyl)anthranilate + diphosphate = 5-phospho-alpha-D-ribose 1-diphosphate + anthranilate. The protein operates within amino-acid biosynthesis; L-tryptophan biosynthesis; L-tryptophan from chorismate: step 2/5. Its function is as follows. Catalyzes the transfer of the phosphoribosyl group of 5-phosphorylribose-1-pyrophosphate (PRPP) to anthranilate to yield N-(5'-phosphoribosyl)-anthranilate (PRA). This Nitrosopumilus maritimus (strain SCM1) protein is Anthranilate phosphoribosyltransferase.